The following is a 75-amino-acid chain: UPF0352 protein ESA_01049 (75 aa).

The protein belongs to the UPF0352 family.

This is UPF0352 protein ESA_01049 from Cronobacter sakazakii (strain ATCC BAA-894) (Enterobacter sakazakii).